The following is a 209-amino-acid chain: Thiamine-phosphate synthase (209 aa).

4-amino-2-methyl-5-(diphosphooxymethyl)pyrimidine is bound by residues 36–40 (QYRDK) and Asn-68. The Mg(2+) site is built by Asp-69 and Asp-87. Thr-106 contributes to the 4-amino-2-methyl-5-(diphosphooxymethyl)pyrimidine binding site. 133 to 135 (SST) is a 2-[(2R,5Z)-2-carboxy-4-methylthiazol-5(2H)-ylidene]ethyl phosphate binding site. Lys-136 is a 4-amino-2-methyl-5-(diphosphooxymethyl)pyrimidine binding site. Gly-163 contributes to the 2-[(2R,5Z)-2-carboxy-4-methylthiazol-5(2H)-ylidene]ethyl phosphate binding site.

The protein belongs to the thiamine-phosphate synthase family. Mg(2+) serves as cofactor.

It carries out the reaction 2-[(2R,5Z)-2-carboxy-4-methylthiazol-5(2H)-ylidene]ethyl phosphate + 4-amino-2-methyl-5-(diphosphooxymethyl)pyrimidine + 2 H(+) = thiamine phosphate + CO2 + diphosphate. It catalyses the reaction 2-(2-carboxy-4-methylthiazol-5-yl)ethyl phosphate + 4-amino-2-methyl-5-(diphosphooxymethyl)pyrimidine + 2 H(+) = thiamine phosphate + CO2 + diphosphate. The enzyme catalyses 4-methyl-5-(2-phosphooxyethyl)-thiazole + 4-amino-2-methyl-5-(diphosphooxymethyl)pyrimidine + H(+) = thiamine phosphate + diphosphate. It participates in cofactor biosynthesis; thiamine diphosphate biosynthesis; thiamine phosphate from 4-amino-2-methyl-5-diphosphomethylpyrimidine and 4-methyl-5-(2-phosphoethyl)-thiazole: step 1/1. In terms of biological role, condenses 4-methyl-5-(beta-hydroxyethyl)thiazole monophosphate (THZ-P) and 2-methyl-4-amino-5-hydroxymethyl pyrimidine pyrophosphate (HMP-PP) to form thiamine monophosphate (TMP). In Pseudomonas paraeruginosa (strain DSM 24068 / PA7) (Pseudomonas aeruginosa (strain PA7)), this protein is Thiamine-phosphate synthase.